A 538-amino-acid polypeptide reads, in one-letter code: Tryptophan 7-halogenase PrnA (538 aa).

Gly13, Thr15, Ala16, Ser39, Ile42, Ile45, Glu49, and Ala50 together coordinate FAD. Lys79 is an active-site residue. A 7-chloro-L-tryptophan-binding site is contributed by Lys79. FAD contacts are provided by Val187 and Leu337. Residue Glu346 coordinates 7-chloro-L-tryptophan. An L-tryptophan-binding site is contributed by Glu346. Chloride contacts are provided by Thr348 and Gly349. Ile350 contributes to the FAD binding site. 7-chloro-L-tryptophan is bound by residues Tyr443, Tyr444, Glu450, and Phe454. L-tryptophan-binding residues include Tyr443, Tyr444, Glu450, and Phe454.

Belongs to the flavin-dependent halogenase family. Bacterial tryptophan halogenase subfamily. In terms of assembly, homodimer.

It catalyses the reaction L-tryptophan + FADH2 + chloride + O2 = 7-chloro-L-tryptophan + FAD + 2 H2O. It participates in antibiotic biosynthesis. Functionally, involved in the biosynthesis of the antifungal antibiotic pyrrolnitrin. Catalyzes the chlorination of tryptophan (Trp) at C7 position to yield 7-chloro-L-tryptophan (7-CLT). This Pseudomonas fluorescens protein is Tryptophan 7-halogenase PrnA.